A 347-amino-acid chain; its full sequence is Phosphoribosylformylglycinamidine cyclo-ligase (347 aa).

This sequence belongs to the AIR synthase family.

It localises to the cytoplasm. The enzyme catalyses 2-formamido-N(1)-(5-O-phospho-beta-D-ribosyl)acetamidine + ATP = 5-amino-1-(5-phospho-beta-D-ribosyl)imidazole + ADP + phosphate + H(+). The protein operates within purine metabolism; IMP biosynthesis via de novo pathway; 5-amino-1-(5-phospho-D-ribosyl)imidazole from N(2)-formyl-N(1)-(5-phospho-D-ribosyl)glycinamide: step 2/2. The sequence is that of Phosphoribosylformylglycinamidine cyclo-ligase from Dechloromonas aromatica (strain RCB).